A 419-amino-acid polypeptide reads, in one-letter code: Pregnancy-specific beta-1-glycoprotein 1 (419 aa).

The first 34 residues, 1 to 34, serve as a signal peptide directing secretion; that stretch reads MGTLSAPPCTQRIKWKGLLLTASLLNFWNLPTTA. Residues 35–144 form the Ig-like V-type domain; sequence QVTIEAEPTK…TGRFTFTLHL (110 aa). 7 N-linked (GlcNAc...) asparagine glycosylation sites follow: Asn61, Asn104, Asn111, Asn199, Asn259, Asn268, and Asn303. Ig-like C2-type domains follow at residues 149–234, 240–327, and 335–410; these read PSIS…VTLN, PKPY…VTLN, and PRIY…KSMT. An intrachain disulfide couples Cys169 to Cys217. Intrachain disulfides connect Cys262-Cys310 and Cys354-Cys394.

The protein belongs to the immunoglobulin superfamily. CEA family.

The protein localises to the secreted. The chain is Pregnancy-specific beta-1-glycoprotein 1 (PSG1) from Homo sapiens (Human).